Here is a 314-residue protein sequence, read N- to C-terminus: Inactive chitinase-like protein 1 (314 aa).

An N-terminal signal peptide occupies residues 1–19 (MKEIVRALEGYGPPKDKAA). The Chitin-binding type-1 domain maps to 20-60 (EQCGWQAGGALCPGGLCCSQYGWCANTPEYCGSGCQSQCDG). Intrachain disulfides connect Cys22/Cys37, Cys31/Cys43, Cys36/Cys50, Cys54/Cys58, Cys92/Cys154, Cys166/Cys174, and Cys273/Cys305.

The protein belongs to the glycosyl hydrolase 19 family. Chitinase class I subfamily.

In terms of biological role, inactive chitinase-like protein that does not exhibit hydrolytic activity toward chitin. Binds strongly to chitin and possesses antifungal activity toward the fungal pathogen Altenaria alternata in plate assays. Inhibits the growth of Fusarium oxysporum on plate assays. Probably involved in defense against fungal pathogens through a mechanism that only involves carbohydrate binding. This chain is Inactive chitinase-like protein 1, found in Hevea brasiliensis (Para rubber tree).